Reading from the N-terminus, the 336-residue chain is Protein-arginine N-acetylglucosaminyltransferase SseK1 (336 aa).

N-beta-linked (GlcNAc) arginine; by autocatalysis glycosylation is present at R24. UDP-N-acetyl-alpha-D-glucosamine is bound by residues 50–52 and Y74; that span reads QWF. R152 carries an N-beta-linked (GlcNAc) arginine; by autocatalysis glycan. The DXD motif signature appears at 223–225; the sequence is DAD. Residue 224–225 coordinates UDP-N-acetyl-alpha-D-glucosamine; it reads AD. A Mn(2+)-binding site is contributed by D225. Residue E255 is the Proton acceptor of the active site. Mn(2+) is bound by residues N322 and S324. Positions 324 and 329 each coordinate UDP-N-acetyl-alpha-D-glucosamine. R333 carries an N-beta-linked (GlcNAc) arginine; by autocatalysis glycan.

Belongs to the glycosyltransferase NleB family. The cofactor is Mn(2+). Auto-glycosylated: arginine GlcNAcylation is required for activity toward death domain-containing host target proteins.

Its subcellular location is the secreted. It is found in the host cytoplasm. It localises to the host cytosol. It catalyses the reaction L-arginyl-[protein] + UDP-N-acetyl-alpha-D-glucosamine = N(omega)-(N-acetyl-beta-D-glucosaminyl)-L-arginyl-[protein] + UDP + H(+). With respect to regulation, protein-arginine N-acetylglucosaminyltransferase activity is inhibited by 100066N compound (flavone analog) and 102644N compound (a substituted isoxazole). Its function is as follows. Protein-arginine N-acetylglucosaminyltransferase effector that disrupts TNF signaling in infected cells, including NF-kappa-B signaling, apoptosis and necroptosis. Acts by catalyzing the transfer of a single N-acetylglucosamine (GlcNAc) to a conserved arginine residue in the death domain of host proteins TRADD and, to a lower extent, FADD: arginine GlcNAcylation prevents homotypic/heterotypic death domain interactions and assembly of the oligomeric TNF-alpha receptor complex, thereby disrupting TNF signaling. Also acts on host proteins without a death domain: catalyzes arginine GlcNAcylation of host GAPDH protein, thereby preventing GAPDH interaction with TRAF2, leading to inhibit NF-kappa-B signaling. Catalyzes GlcNAcylation of host tubulin-folding cofactor TBCB, thereby promoting microtubule stability. Also mediates auto-GlcNAcylation, which is required for activity toward death domain-containing host target proteins. This chain is Protein-arginine N-acetylglucosaminyltransferase SseK1, found in Salmonella enteritidis (strain 2009K0958).